Consider the following 696-residue polypeptide: Elongation factor G (696 aa).

Residues 8–290 (ERYRNIGISA…KVIELMPAPT (283 aa)) enclose the tr-type G domain. GTP-binding positions include 17–24 (AHIDAGKT), 88–92 (DTPGH), and 142–145 (NKMD).

It belongs to the TRAFAC class translation factor GTPase superfamily. Classic translation factor GTPase family. EF-G/EF-2 subfamily.

The protein resides in the cytoplasm. Its function is as follows. Catalyzes the GTP-dependent ribosomal translocation step during translation elongation. During this step, the ribosome changes from the pre-translocational (PRE) to the post-translocational (POST) state as the newly formed A-site-bound peptidyl-tRNA and P-site-bound deacylated tRNA move to the P and E sites, respectively. Catalyzes the coordinated movement of the two tRNA molecules, the mRNA and conformational changes in the ribosome. The polypeptide is Elongation factor G (Thiobacillus denitrificans (strain ATCC 25259 / T1)).